The primary structure comprises 175 residues: MAEVHVIGQIIGASGFSESSLFCKWGIHTGAAWKLLSGVREGQTQVDTPQIGDMAYWSHPIDLHFATKGLQGWPRLHFQVWSQDSFGRCQLAGYGFCHVPSSPGTHQLACPTWRPLGSWREQLARAFVGGGPQLLHGDTIYSGADRYRLHTAAGGTVHLEIGLLLRNFDRYGVEC.

In terms of domain architecture, C2 B9-type spans 2-118 (AEVHVIGQII…ACPTWRPLGS (117 aa)).

The protein belongs to the B9D family. In terms of assembly, part of the tectonic-like complex (also named B9 complex). Interacts with TUBG1.

The protein localises to the cytoplasm. Its subcellular location is the cytoskeleton. It localises to the cilium basal body. It is found in the cilium axoneme. The protein resides in the nucleus. Component of the tectonic-like complex, a complex localized at the transition zone of primary cilia and acting as a barrier that prevents diffusion of transmembrane proteins between the cilia and plasma membranes. The chain is B9 domain-containing protein 2 (B9D2) from Homo sapiens (Human).